A 68-amino-acid chain; its full sequence is MPKHEFSVDMTCEGCSNAVSRVLNKLGGVEFDIDLPNKKVCINSEHSVDILLETLEKTGKAVSYLGPK.

Positions 1–63 (MPKHEFSVDM…TLEKTGKAVS (63 aa)) constitute an HMA domain. Cu cation is bound by residues C12 and C15. A Phosphoserine modification is found at S47. At K60 the chain carries N6-acetyllysine.

Belongs to the ATX1 family. Homodimer. Interacts with ATP7B. Interacts with ATP7A. Interacts (via dimer form) with SLC31A1 (via C-terminal domain); this interaction improves ATOX1 stability and controls intracellular Cu(I) levels.

Binds and deliver cytosolic copper to the copper ATPase proteins. May be important in cellular antioxidant defense. This is Copper transport protein ATOX1 from Canis lupus familiaris (Dog).